The sequence spans 378 residues: MKLHEYQARDIVARYGIPVTGGGVAATAEEVQKVAEQIGGPVAVKAQVHVGGRGKAGGIKLANTPAEAFDAGKAILGMDIKGLTVEKVLVAEAITFEKEIYLGVILDRATKRVVLIASSEGGVEIEEVAKINPDAIIKLAADPLLGLQPYQAQELAYSIGITDAKQARQFSSIATGLYRAFVENDAELAEINPLVVLPNGQLQALDSKIVLDDSGLFRHSEVAGMRDIAGEPESEIKARENGLTFIKLDGNIGCMVNGAGLAMATMDVVNLFGGEPANFLDIGGGANAQKVAAALDIILDDPNVKVVMVNIFGGITRCDEVAKGIVEAQKIIKRQVPMVVRLVGTNEAEGQRILADASLTPASTLADAAQKAVDIAKQ.

One can recognise an ATP-grasp domain in the interval 9-237; the sequence is RDIVARYGIP…IAGEPESEIK (229 aa). Residues K45, 52–54, I94, and E99 each bind ATP; that span reads GRG. The Mg(2+) site is built by N192 and D206. Substrate-binding positions include N257 and 314–316; that span reads GIT.

It belongs to the succinate/malate CoA ligase beta subunit family. Heterotetramer of two alpha and two beta subunits. Mg(2+) serves as cofactor.

The enzyme catalyses succinate + ATP + CoA = succinyl-CoA + ADP + phosphate. It catalyses the reaction GTP + succinate + CoA = succinyl-CoA + GDP + phosphate. It functions in the pathway carbohydrate metabolism; tricarboxylic acid cycle; succinate from succinyl-CoA (ligase route): step 1/1. Its function is as follows. Succinyl-CoA synthetase functions in the citric acid cycle (TCA), coupling the hydrolysis of succinyl-CoA to the synthesis of either ATP or GTP and thus represents the only step of substrate-level phosphorylation in the TCA. The beta subunit provides nucleotide specificity of the enzyme and binds the substrate succinate, while the binding sites for coenzyme A and phosphate are found in the alpha subunit. The protein is Succinate--CoA ligase [ADP-forming] subunit beta of Herpetosiphon aurantiacus (strain ATCC 23779 / DSM 785 / 114-95).